The following is a 117-amino-acid chain: MISIILVMIGGGFGAIARSAITDYFNHKFTSKLPIATLIVNLVGSFLIGLTIGLSISISWFPAFFVTGFLGGLTTFSTLAKELTLMMTPKFDINLFLNYSLLQFIIGFIACYIGYHI.

Transmembrane regions (helical) follow at residues 1–21 (MISI…RSAI) and 46–66 (FLIG…AFFV). Na(+) contacts are provided by glycine 71 and threonine 74. Residues 95–115 (LFLNYSLLQFIIGFIACYIGY) form a helical membrane-spanning segment.

This sequence belongs to the fluoride channel Fluc/FEX (TC 1.A.43) family.

It is found in the cell membrane. The enzyme catalyses fluoride(in) = fluoride(out). Na(+) is not transported, but it plays an essential structural role and its presence is essential for fluoride channel function. Its function is as follows. Fluoride-specific ion channel. Important for reducing fluoride concentration in the cell, thus reducing its toxicity. The protein is Fluoride-specific ion channel FluC 2 of Staphylococcus aureus (strain Mu50 / ATCC 700699).